We begin with the raw amino-acid sequence, 700 residues long: Elongation factor G (700 aa).

The tr-type G domain occupies 13 to 288 (SKIRNIGITA…AVIDYLPAPD (276 aa)). GTP-binding positions include 22–29 (AHIDAGKT), 86–90 (DTPGH), and 140–143 (NKLD).

The protein belongs to the TRAFAC class translation factor GTPase superfamily. Classic translation factor GTPase family. EF-G/EF-2 subfamily.

Its subcellular location is the cytoplasm. Catalyzes the GTP-dependent ribosomal translocation step during translation elongation. During this step, the ribosome changes from the pre-translocational (PRE) to the post-translocational (POST) state as the newly formed A-site-bound peptidyl-tRNA and P-site-bound deacylated tRNA move to the P and E sites, respectively. Catalyzes the coordinated movement of the two tRNA molecules, the mRNA and conformational changes in the ribosome. The chain is Elongation factor G from Gluconobacter oxydans (strain 621H) (Gluconobacter suboxydans).